Reading from the N-terminus, the 132-residue chain is RuBisCO chaperone RbcX (132 aa).

Residues H110 to H132 form a disordered region. Polar residues predominate over residues L111–H132.

Belongs to the RbcX family. As to quaternary structure, homodimer. Interacts with the exposed C-terminal peptide of RbcL via its central cleft, contacts a second RbcL monomer via its peripheral polar surface. RbcX and Raf1 can bind simultaneously to RbcL.

The protein resides in the carboxysome. Its subcellular location is the cytoplasm. Its function is as follows. An RbcL-specific chaperone. The central cleft of the RbcX homodimer (RbcX2) binds the C-terminus of an RbcL monomer, stabilizing the C-terminus and probably preventing its reassociation with chaperonin GroEL-ES. At the same time the peripheral region of RbcX2 binds a second RbcL monomer, bridging the RbcL homodimers in the correct orientation. The RbcX2(2)-bound RbcL dimers then assemble into the RbcL8 core (RbcL8-(RbcX2)8). RbcS binding triggers the release of RbcX2. When rbcL-rbcX-rbcS or rbcL-rbcS were overexpressed in E.coli no change in reconstituted RuBisCO activity was observed, which suggests RbcX plays no role in RuBisCO assembly in this system. However in PubMed:8472962 E.coli chaperones groL and groS were also overexpressed, which may compensate for lack of rbcX. The protein is RuBisCO chaperone RbcX of Nostoc sp. (strain PCC 7120 / SAG 25.82 / UTEX 2576).